Reading from the N-terminus, the 640-residue chain is Biosynthetic arginine decarboxylase (640 aa).

At K109 the chain carries N6-(pyridoxal phosphate)lysine. A substrate-binding site is contributed by 291–301; the sequence is LDVGGGLGVDY.

Belongs to the Orn/Lys/Arg decarboxylase class-II family. SpeA subfamily. It depends on Mg(2+) as a cofactor. Pyridoxal 5'-phosphate serves as cofactor.

It carries out the reaction L-arginine + H(+) = agmatine + CO2. Its pathway is amine and polyamine biosynthesis; agmatine biosynthesis; agmatine from L-arginine: step 1/1. Catalyzes the biosynthesis of agmatine from arginine. In Synechococcus sp. (strain RCC307), this protein is Biosynthetic arginine decarboxylase.